The chain runs to 240 residues: Probable transcriptional regulatory protein BLi02909/BL01150 (240 aa).

A compositionally biased stretch (basic residues) spans 1–14 (MAGHSKWKNIQRRK). The disordered stretch occupies residues 1–21 (MAGHSKWKNIQRRKNAQDAKR).

Belongs to the TACO1 family.

The protein resides in the cytoplasm. This Bacillus licheniformis (strain ATCC 14580 / DSM 13 / JCM 2505 / CCUG 7422 / NBRC 12200 / NCIMB 9375 / NCTC 10341 / NRRL NRS-1264 / Gibson 46) protein is Probable transcriptional regulatory protein BLi02909/BL01150.